Reading from the N-terminus, the 174-residue chain is Ribosome maturation factor RimM (174 aa).

The PRC barrel domain occupies 96–169 (EPDTYYDHQL…ILEIDPPDGL (74 aa)).

Belongs to the RimM family. In terms of assembly, binds ribosomal protein uS19.

It is found in the cytoplasm. Its function is as follows. An accessory protein needed during the final step in the assembly of 30S ribosomal subunit, possibly for assembly of the head region. Essential for efficient processing of 16S rRNA. May be needed both before and after RbfA during the maturation of 16S rRNA. It has affinity for free ribosomal 30S subunits but not for 70S ribosomes. The sequence is that of Ribosome maturation factor RimM from Mycobacterium marinum (strain ATCC BAA-535 / M).